A 405-amino-acid chain; its full sequence is L-rhamnonate dehydratase (405 aa).

Residues His-33 and Arg-59 each coordinate substrate. Residues Asp-226, Glu-252, and Glu-280 each coordinate Mg(2+). Catalysis depends on His-329, which acts as the Proton acceptor. Glu-349 contacts substrate.

It belongs to the mandelate racemase/muconate lactonizing enzyme family. RhamD subfamily. Homooctamer; tetramer of dimers. It depends on Mg(2+) as a cofactor.

It catalyses the reaction L-rhamnonate = 2-dehydro-3-deoxy-L-rhamnonate + H2O. Functionally, catalyzes the dehydration of L-rhamnonate to 2-keto-3-deoxy-L-rhamnonate (KDR). In Escherichia coli O127:H6 (strain E2348/69 / EPEC), this protein is L-rhamnonate dehydratase.